Here is a 317-residue protein sequence, read N- to C-terminus: R-spondin-3 (317 aa).

An N-terminal signal peptide occupies residues 1 to 20; that stretch reads MQLQLISIVLILHFMEYTNC. FU repeat units lie at residues 34–86, 92–135, and 139–183; these read SGVS…GFYG, RNDC…GLVP, and KKEC…EFEP. Intrachain disulfides connect C41/C48, C45/C54, C57/C76, C80/C95, C98/C105, C102/C111, C114/C125, C129/C189, C195/C237, C206/C213, and C246/C253. Residue N184 is glycosylated (N-linked (GlcNAc...) asparagine). In terms of domain architecture, TSP type-1 spans 194-254; sequence HCEVSEWSEW…ECFVKKKRCK (61 aa). The span at 251–268 shows a compositional bias: basic residues; the sequence is KRCKPPKGQRRGEKKKRF. The interval 251 to 317 is disordered; that stretch reads KRCKPPKGQR…RDQSRDAGTV (67 aa). Residues 274–303 are compositionally biased toward basic and acidic residues; that stretch reads VTAEARRERKREREKETIDREESENRNKTE. An N-linked (GlcNAc...) asparagine glycan is attached at N300.

This sequence belongs to the R-spondin family. As to quaternary structure, binds heparin.

The protein resides in the secreted. Its function is as follows. Activator of the canonical Wnt signaling pathway by acting as a ligand for lgr4-6 receptors, which acts as a key regulator of angiogenesis. Upon binding to lgr4-6 (lgr4, lgr5 or lgr6), lgr4-6 associate with phosphorylated lrp6 and frizzled receptors that are activated by extracellular Wnt receptors, triggering the canonical Wnt signaling pathway to increase expression of target genes. Acts both in the canonical. Wnt/beta-catenin-dependent pathway and in non-canonical Wnt signaling pathway. Acts as a key regulator of angiogenesis by controlling vascular stability and pruning: acts by activating the non-canonical Wnt signaling pathway in endothelial cells. Can also amplify Wnt signaling pathway independently of LGR4-6 receptors, possibly by acting as a direct antagonistic ligand to RNF43 and ZNRF3. The sequence is that of R-spondin-3 (rspo3) from Danio rerio (Zebrafish).